The chain runs to 90 residues: Large ribosomal subunit protein bL27 (90 aa).

Residues 1 to 20 (MAHKKAGGSSRNGRDSAGKR) are disordered.

This sequence belongs to the bacterial ribosomal protein bL27 family.

The protein is Large ribosomal subunit protein bL27 of Rhodopseudomonas palustris (strain BisB18).